Consider the following 463-residue polypeptide: Digalactosyldiacylglycerol synthase 2, chloroplastic (463 aa).

A signal peptide spans 1–22 (MGKKQHIAIFTTASLPWLTGTA).

The protein belongs to the glycosyltransferase group 1 family. Glycosyltransferase 4 subfamily. High expression in nodules infected cells, and low in nodule and root vascular tissue.

It is found in the plastid. The protein resides in the chloroplast outer membrane. The protein localises to the plastid outer membrane. The enzyme catalyses a 1,2-diacyl-3-O-(beta-D-galactosyl)-sn-glycerol + UDP-alpha-D-galactose = a 1,2-diacyl-3-O-[alpha-D-galactosyl-(1-&gt;6)-beta-D-galactosyl]-sn-glycerol + UDP + H(+). Its function is as follows. Involved in the synthesis of diacylglycerol galactolipids that are specifically found in thylakoid and in nodule peribacteroid membranes. Specific for alpha-glycosidic linkages. The sequence is that of Digalactosyldiacylglycerol synthase 2, chloroplastic from Lotus japonicus (Lotus corniculatus var. japonicus).